Reading from the N-terminus, the 83-residue chain is MTHKREIQGVVVKKSGDKTASVLVTRSVLHPKYHKTVKRFKKYLIHDEKNELNVGDSVIAIECRPLSKTKSFRLKTIVATGVK.

This sequence belongs to the universal ribosomal protein uS17 family. Part of the 30S ribosomal subunit.

Its function is as follows. One of the primary rRNA binding proteins, it binds specifically to the 5'-end of 16S ribosomal RNA. This is Small ribosomal subunit protein uS17 from Aliarcobacter butzleri (strain RM4018) (Arcobacter butzleri).